The following is a 1907-amino-acid chain: Receptor-type tyrosine-protein phosphatase S (1907 aa).

An N-terminal signal peptide occupies residues Met-1–Ala-29. Residues Glu-30–Gly-1257 are Extracellular-facing. 3 consecutive Ig-like C2-type domains span residues Pro-33–Thr-123, Pro-135–Tyr-224, and Pro-232–Thr-314. 2 cysteine pairs are disulfide-bonded: Cys-54–Cys-107 and Cys-156–Cys-207. Positions Lys-68–Lys-72 are important for binding to glycosaminoglycan chains. Residues Asn-250 and Asn-295 are each glycosylated (N-linked (GlcNAc...) asparagine). Residues Cys-253 and Cys-298 are joined by a disulfide bond. Fibronectin type-III domains are found at residues Ala-321–Gln-411, Ala-416–Gly-510, Gln-514–Ala-603, Pro-608–Asp-705, Pro-710–Ala-809, Val-810–Gly-906, Phe-907–Asp-1008, and Ser-1011–Asn-1095. Residues Pro-691–Val-700 are compositionally biased toward low complexity. Residues Pro-691–Pro-711 form a disordered region. A glycan (N-linked (GlcNAc...) asparagine) is linked at Asn-720. A glycan (N-linked (GlcNAc...) asparagine) is linked at Asn-916. Residues Leu-1258 to Ile-1278 form a helical membrane-spanning segment. Over Leu-1279–Thr-1907 the chain is Cytoplasmic. The segment covering Asp-1286–Thr-1296 has biased composition (basic and acidic residues). The segment at Asp-1286–Pro-1313 is disordered. Tyrosine-protein phosphatase domains lie at Leu-1352 to Ala-1607 and Met-1639 to Tyr-1898. Residues Asp-1516, Cys-1548–Arg-1554, and Gln-1592 contribute to the substrate site. The Phosphocysteine intermediate role is filled by Cys-1548. Cys-1839 functions as the Phosphocysteine intermediate in the catalytic mechanism.

It belongs to the protein-tyrosine phosphatase family. Receptor class 2A subfamily. As to quaternary structure, binding to large heparan sulfate proteoglycan structures promotes oligomerization. Binding to chondroitin sulfate proteoglycan does not lead to oligomerization. Interacts (via Ig-like domains) with NTRK3. Interacts (via Ig-like domains) with NTRK1, but does not form detectable complexes with NTRK2. Interacts with PPFIA1, PPFIA2 and PPFIA3. Post-translationally, a cleavage occurs, separating the extracellular domain from the transmembrane segment. This process called 'ectodomain shedding' is thought to be involved in receptor desensitization, signal transduction and/or membrane localization. Detected in brain cortex, cerebellum and thoracic spinal cord (at protein level). Detected in motor cortex and white matter of the spinal cord, but not in spinal cord gray matter. Isoform 1 and isoform 6 are predominantly expressed in the brain (cerebrum and cerebellum) and to a lesser extent in the heart and skeletal muscle. Also found in neuronal-derived cell lines. Detected in the ganglion cell layer of the retina and in glial cells along the optic nerve. Detected in bone marrow and spleen plasmacytoid dendritic cells.

It is found in the cell membrane. The protein localises to the cell projection. The protein resides in the axon. It localises to the perikaryon. Its subcellular location is the cytoplasmic vesicle. It is found in the secretory vesicle. The protein localises to the synaptic vesicle membrane. The protein resides in the synapse. It localises to the synaptosome. Its subcellular location is the postsynaptic density. It is found in the neuron projection. The protein localises to the growth cone. The enzyme catalyses O-phospho-L-tyrosyl-[protein] + H2O = L-tyrosyl-[protein] + phosphate. Cell surface receptor that binds to glycosaminoglycans, including chondroitin sulfate proteoglycans and heparan sulfate proteoglycans. Binding to chondroitin sulfate and heparan sulfate proteoglycans has opposite effects on PTPRS oligomerization and regulation of neurite outgrowth. Contributes to the inhibition of neurite and axonal outgrowth by chondroitin sulfate proteoglycans, also after nerve transection. Plays a role in stimulating neurite outgrowth in response to the heparan sulfate proteoglycan GPC2. Required for normal brain development, especially for normal development of the pituitary gland and the olfactory bulb. Functions as a tyrosine phosphatase. Mediates dephosphorylation of NTRK1, NTRK2 and NTRK3. Plays a role in down-regulation of signaling cascades that lead to the activation of Akt and MAP kinases. Down-regulates TLR9-mediated activation of NF-kappa-B, as well as production of TNF, interferon alpha and interferon beta. The sequence is that of Receptor-type tyrosine-protein phosphatase S (Ptprs) from Mus musculus (Mouse).